Consider the following 211-residue polypeptide: Pyridoxine/pyridoxamine 5'-phosphate oxidase (211 aa).

Substrate contacts are provided by residues 7–10 (RREY) and lysine 65. Residues 60 to 65 (RIVLLK), 75 to 76 (YT), arginine 81, lysine 82, and glutamine 104 contribute to the FMN site. Positions 122, 126, and 130 each coordinate substrate. Residues 139 to 140 (QS) and tryptophan 184 each bind FMN. Substrate is bound at residue 190-192 (RLH). Residue arginine 194 participates in FMN binding.

It belongs to the pyridoxamine 5'-phosphate oxidase family. As to quaternary structure, homodimer. The cofactor is FMN.

It carries out the reaction pyridoxamine 5'-phosphate + O2 + H2O = pyridoxal 5'-phosphate + H2O2 + NH4(+). It catalyses the reaction pyridoxine 5'-phosphate + O2 = pyridoxal 5'-phosphate + H2O2. It functions in the pathway cofactor metabolism; pyridoxal 5'-phosphate salvage; pyridoxal 5'-phosphate from pyridoxamine 5'-phosphate: step 1/1. Its pathway is cofactor metabolism; pyridoxal 5'-phosphate salvage; pyridoxal 5'-phosphate from pyridoxine 5'-phosphate: step 1/1. Its function is as follows. Catalyzes the oxidation of either pyridoxine 5'-phosphate (PNP) or pyridoxamine 5'-phosphate (PMP) into pyridoxal 5'-phosphate (PLP). This chain is Pyridoxine/pyridoxamine 5'-phosphate oxidase, found in Vibrio campbellii (strain ATCC BAA-1116).